Consider the following 413-residue polypeptide: MAEAGPQAPPPPGTPSRHEKSLGLLTTKFVSLLQEAKDGVLDLKLAADTLAVRQKRRIYDITNVLEGIGLIEKKSKNSIQWKGVGPGCNTREIADKLIELKAEIEELQQREQELDQHKVWVQQSIRNVTEDVQNSCLAYVTHEDICRCFAGDTLLAIRAPSGTSLEVPIPEGLNGQKKYQIHLKSVSGPIEVLLVNKEAWSSPPVAVPVPPPEDLLQSPSAVSTPPPLPKPALAQSQEASRPNSPQLTPTAVPGSAEVQGMAGPAAEITVSGGPGTDSKDSGELSSLPLGPTTLDTRPLQSSALLDSSSSSSSSSSSSSNSNSSSSSGPNPSTSFEPIKADPTGVLELPKELSEIFDPTRECMSSELLEELMSSEVFAPLLRLSPPPGDHDYIYNLDESEGVCDLFDVPVLNL.

The interval 1–20 (MAEAGPQAPPPPGTPSRHEK) is disordered. Position 2 is an N-acetylalanine (A2). Residues 16–85 (SRHEKSLGLL…KNSIQWKGVG (70 aa)) mediate DNA binding. Residues 43–65 (LKLAADTLAVRQKRRIYDITNVL) form a leucine-zipper region. Positions 48–85 (DTLAVRQKRRIYDITNVLEGIGLIEKKSKNSIQWKGVG) match the DEF box motif. Positions 86–181 (PGCNTREIAD…GLNGQKKYQI (96 aa)) are dimerization. Residues 211–340 (PPEDLLQSPS…PSTSFEPIKA (130 aa)) are disordered. 2 stretches are compositionally biased toward polar residues: residues 234-249 (AQSQ…QLTP) and 293-306 (TLDT…ALLD). A compositionally biased stretch (low complexity) spans 307–327 (SSSSSSSSSSSSSNSNSSSSS). Residues 337-413 (PIKADPTGVL…DLFDVPVLNL (77 aa)) are transactivation. Position 384 is a phosphoserine (S384). Positions 389-392 (DHDY) match the HCFC1-binding-motif (HBM) motif. Residues 390–407 (HDYIYNLDESEGVCDLFD) are interaction with RBL1 and RBL2.

The protein belongs to the E2F/DP family. In terms of assembly, component of the DRTF1/E2F transcription factor complex. Binds cooperatively with TFDP1/Dp-1 to E2F sites. The E2F4/TFDP1 dimer interacts preferentially with pocket protein RBL1, which inhibits the E2F transactivation domain. Lower affinity interaction has been found with retinoblastoma protein RB1. Interacts with TRRAP, which probably mediates its interaction with histone acetyltransferase complexes, leading to transcription activation. Interacts with HCFC1. Component of the DREAM complex (also named LINC complex) at least composed of E2F4, E2F5, LIN9, LIN37, LIN52, LIN54, MYBL1, MYBL2, RBL1, RBL2, RBBP4, TFDP1 and TFDP2. The complex exists in quiescent cells where it represses cell cycle-dependent genes. It dissociates in S phase when LIN9, LIN37, LIN52 and LIN54 form a subcomplex that binds to MYBL2. Interacts with PML (isoform PML-1, isoform PML-2, isoform PML-3, isoform PML-4 and isoform PML-5). Interacts with CEBPA (when phosphorylated). Differentially phosphorylated in vivo. In terms of tissue distribution, found in all tissue examined including heart, brain, placenta, lung, liver, skeletal muscle, kidney and pancreas.

It is found in the nucleus. Transcription activator that binds DNA cooperatively with DP proteins through the E2 recognition site, 5'-TTTC[CG]CGC-3' found in the promoter region of a number of genes whose products are involved in cell cycle regulation or in DNA replication. The DRTF1/E2F complex functions in the control of cell-cycle progression from G1 to S phase. E2F4 binds with high affinity to RBL1 and RBL2. In some instances can also bind RB1. Specifically required for multiciliate cell differentiation: together with MCIDAS and E2F5, binds and activate genes required for centriole biogenesis. The sequence is that of Transcription factor E2F4 (E2F4) from Homo sapiens (Human).